Here is a 184-residue protein sequence, read N- to C-terminus: TRAF-interacting protein with FHA domain-containing protein A (184 aa).

Thr-9 is modified (phosphothreonine). The 57-residue stretch at 47–103 (VKFGRNSNMCQYTFQDKQVSRIQFVLQPFKQFNSSVLSFEIKNMSKKTSLMVDNQEL) folds into the FHA domain. Residues 152–184 (NNWPTQNPIPEDGMYSSYFTHRSSPSEMDENEL) are disordered. Positions 168–177 (SYFTHRSSPS) are enriched in polar residues.

This sequence belongs to the TIFA family. In terms of assembly, homooligomer; homooligomerizes following phosphorylation at Thr-9. Interacts with IRAK1, TRAF2 and TRAF6. Interacts with TIFAB; binding to TIFAB inhibits TRAF6 activation, possibly by inducing a conformational change in TIFA. Interacts with ZCCHC11; binding to ZCCHC11 suppresses the TRAF6-dependent activation of NF-kappa-B. Post-translationally, phosphorylated at Thr-9 following detection of ADP-D-glycero-beta-D-manno-heptose (ADP-Heptose) by ALPK1. Phosphorylation at Thr-9 by ALPK1 leads to the formation of an intermolecular binding between the FHA domain and phosphorylated Thr-9, promoting TIFA oligomerization and TIFA-mediated NF-kappa-B activation. In terms of tissue distribution, highly expressed in the spleen and at lower levels in heart, brain, lung, liver, kidney and testes.

It localises to the cytoplasm. In terms of biological role, adapter molecule that plays a key role in the activation of pro-inflammatory NF-kappa-B signaling following detection of bacterial pathogen-associated molecular pattern metabolites (PAMPs). Promotes activation of an innate immune response by inducing the oligomerization and polyubiquitination of TRAF6, which leads to the activation of TAK1 and IKK through a proteasome-independent mechanism. TIFA-dependent innate immune response is triggered by ADP-D-glycero-beta-D-manno-heptose (ADP-Heptose), a potent PAMP present in all Gram-negative and some Gram-positive bacteria: ADP-Heptose is recognized by ALPK1, which phosphorylates TIFA at Thr-9, leading to TIFA homooligomerization and subsequent activation of pro-inflammatory NF-kappa-B signaling. The polypeptide is TRAF-interacting protein with FHA domain-containing protein A (Mus musculus (Mouse)).